The sequence spans 268 residues: Undecaprenyl-diphosphatase (268 aa).

The next 7 helical transmembrane spans lie at 41-61 (PGPS…VCYF), 89-109 (IFIG…FVPY), 114-134 (IFRS…LMYI), 155-175 (LIGL…GVTI), 191-211 (FSFL…FISS), 218-238 (FSFF…LLAI), and 248-268 (NGLK…LLNL).

This sequence belongs to the UppP family.

The protein resides in the cell inner membrane. The catalysed reaction is di-trans,octa-cis-undecaprenyl diphosphate + H2O = di-trans,octa-cis-undecaprenyl phosphate + phosphate + H(+). Functionally, catalyzes the dephosphorylation of undecaprenyl diphosphate (UPP). Confers resistance to bacitracin. The sequence is that of Undecaprenyl-diphosphatase from Prochlorococcus marinus (strain MIT 9312).